A 182-amino-acid polypeptide reads, in one-letter code: ATP synthase subunit b, chloroplastic (182 aa).

A helical membrane pass occupies residues 29 to 47 (IINLALLIVLVINVAKDVL).

The protein belongs to the ATPase B chain family. In terms of assembly, F-type ATPases have 2 components, F(1) - the catalytic core - and F(0) - the membrane proton channel. F(1) has five subunits: alpha(3), beta(3), gamma(1), delta(1), epsilon(1). F(0) has four main subunits: a(1), b(1), b'(1) and c(10-14). The alpha and beta chains form an alternating ring which encloses part of the gamma chain. F(1) is attached to F(0) by a central stalk formed by the gamma and epsilon chains, while a peripheral stalk is formed by the delta, b and b' chains.

The protein resides in the plastid. The protein localises to the chloroplast thylakoid membrane. In terms of biological role, f(1)F(0) ATP synthase produces ATP from ADP in the presence of a proton or sodium gradient. F-type ATPases consist of two structural domains, F(1) containing the extramembraneous catalytic core and F(0) containing the membrane proton channel, linked together by a central stalk and a peripheral stalk. During catalysis, ATP synthesis in the catalytic domain of F(1) is coupled via a rotary mechanism of the central stalk subunits to proton translocation. Component of the F(0) channel, it forms part of the peripheral stalk, linking F(1) to F(0). The sequence is that of ATP synthase subunit b, chloroplastic from Heterosigma akashiwo (strain NIES-293 / 8280G21-1).